We begin with the raw amino-acid sequence, 488 residues long: MELSITTSIALATIVFFLYKLATRPKSTKKQLPEASRLPIIGHMHHLIGTMPHRGVMDLARKHGSLMHLQLGEVSTIVVSSPKWAKEILTTYDITFANRPETLTGEIIAYHNTDIVLAPYGEYWRQLRKLCTLELLSVKKVKSFQSIREEECWNLVKEVKESGSGKPINLSESIFTMIATILSRAAFGKGIKDQREFTEIVKEILRQTGGFDVADIFPSKKFLHHLSGKRARLTSIHKKLDNLINNIVAEHHVSTSSKANETLLDVLLRLKDSAEFPLTADNVKAIILDMFGAGTDTSSATVEWAISELIRCPRAMEKVQAELRQALNGKEKIQEEDIQDLAYLNLVIRETLRLHPPLPLVMPRECREPVNLAGYEIANKTKLIVNVFAINRDPEYWKDAEAFIPERFENNPNNIMGADYEYLPFGAGRRMCPGAALGLANVQLPLANILYHFNWKLPNGASHDQLDMTESFGATVQRKTELLLVPSF.

Residues 1 to 6 (MELSIT) lie on the Cytoplasmic side of the membrane. Residues 7–23 (TSIALATIVFFLYKLAT) traverse the membrane as a helical; Signal-anchor for type II membrane protein segment. The Lumenal segment spans residues 24 to 488 (RPKSTKKQLP…KTELLLVPSF (465 aa)). Residues asparagine 169, asparagine 260, and asparagine 379 are each glycosylated (N-linked (GlcNAc...) asparagine). Cysteine 432 lines the heme pocket.

Belongs to the cytochrome P450 family. Requires heme as cofactor.

It is found in the endoplasmic reticulum membrane. The enzyme catalyses (+)-(R)-germacrene A + 3 reduced [NADPH--hemoprotein reductase] + 3 O2 = germacra-1(10),4,11(13)-trien-12-oate + 3 oxidized [NADPH--hemoprotein reductase] + 4 H2O + 4 H(+). It participates in secondary metabolite biosynthesis; terpenoid biosynthesis. Its function is as follows. Involved in the biosynthesis of germacrene-derived sesquiterpene lactones. Catalyzes three consecutive oxidations of germacrene A to produce germacrene A acid. Could also catalyze the three-step oxidation of non-natural substrate amorphadiene to artemisinic acid. This is Germacrene A hydroxylase from Lactuca sativa (Garden lettuce).